A 158-amino-acid chain; its full sequence is Cyclic pyranopterin monophosphate synthase (158 aa).

Residues 76–78 (LCH) and 114–115 (ME) contribute to the substrate site. Asp-129 is an active-site residue.

This sequence belongs to the MoaC family. In terms of assembly, homohexamer; trimer of dimers.

The catalysed reaction is (8S)-3',8-cyclo-7,8-dihydroguanosine 5'-triphosphate = cyclic pyranopterin phosphate + diphosphate. It participates in cofactor biosynthesis; molybdopterin biosynthesis. Functionally, catalyzes the conversion of (8S)-3',8-cyclo-7,8-dihydroguanosine 5'-triphosphate to cyclic pyranopterin monophosphate (cPMP). The sequence is that of Cyclic pyranopterin monophosphate synthase from Shewanella sediminis (strain HAW-EB3).